The following is a 149-amino-acid chain: D-aminoacyl-tRNA deacylase (149 aa).

Residues 138–139 carry the Gly-cisPro motif, important for rejection of L-amino acids motif; that stretch reads GP.

The protein belongs to the DTD family. As to quaternary structure, homodimer.

Its subcellular location is the cytoplasm. It catalyses the reaction glycyl-tRNA(Ala) + H2O = tRNA(Ala) + glycine + H(+). The enzyme catalyses a D-aminoacyl-tRNA + H2O = a tRNA + a D-alpha-amino acid + H(+). In terms of biological role, an aminoacyl-tRNA editing enzyme that deacylates mischarged D-aminoacyl-tRNAs. Also deacylates mischarged glycyl-tRNA(Ala), protecting cells against glycine mischarging by AlaRS. Acts via tRNA-based rather than protein-based catalysis; rejects L-amino acids rather than detecting D-amino acids in the active site. By recycling D-aminoacyl-tRNA to D-amino acids and free tRNA molecules, this enzyme counteracts the toxicity associated with the formation of D-aminoacyl-tRNA entities in vivo and helps enforce protein L-homochirality. The sequence is that of D-aminoacyl-tRNA deacylase from Chlorobaculum parvum (strain DSM 263 / NCIMB 8327) (Chlorobium vibrioforme subsp. thiosulfatophilum).